The following is a 950-amino-acid chain: Valine--tRNA ligase (950 aa).

A 'HIGH' region motif is present at residues 40 to 50 (PNVTGSLHMGH). The 'KMSKS' region motif lies at 551 to 555 (KMSKS). Lys554 serves as a coordination point for ATP. Residues 881–950 (LIDKSAELGR…AEQRQKIAAL (70 aa)) are a coiled coil.

It belongs to the class-I aminoacyl-tRNA synthetase family. ValS type 1 subfamily. Monomer.

Its subcellular location is the cytoplasm. It carries out the reaction tRNA(Val) + L-valine + ATP = L-valyl-tRNA(Val) + AMP + diphosphate. Catalyzes the attachment of valine to tRNA(Val). As ValRS can inadvertently accommodate and process structurally similar amino acids such as threonine, to avoid such errors, it has a 'posttransfer' editing activity that hydrolyzes mischarged Thr-tRNA(Val) in a tRNA-dependent manner. The polypeptide is Valine--tRNA ligase (Pseudomonas aeruginosa (strain ATCC 15692 / DSM 22644 / CIP 104116 / JCM 14847 / LMG 12228 / 1C / PRS 101 / PAO1)).